Here is a 209-residue protein sequence, read N- to C-terminus: Uracil phosphoribosyltransferase (209 aa).

Residues R79, R104, and 131-139 (DPMLATGGS) contribute to the 5-phospho-alpha-D-ribose 1-diphosphate site. Residues I194 and 199 to 201 (GDA) each bind uracil. Residue D200 coordinates 5-phospho-alpha-D-ribose 1-diphosphate.

Belongs to the UPRTase family. Requires Mg(2+) as cofactor.

The enzyme catalyses UMP + diphosphate = 5-phospho-alpha-D-ribose 1-diphosphate + uracil. It functions in the pathway pyrimidine metabolism; UMP biosynthesis via salvage pathway; UMP from uracil: step 1/1. Its activity is regulated as follows. Allosterically activated by GTP. In terms of biological role, catalyzes the conversion of uracil and 5-phospho-alpha-D-ribose 1-diphosphate (PRPP) to UMP and diphosphate. This is Uracil phosphoribosyltransferase from Shouchella clausii (strain KSM-K16) (Alkalihalobacillus clausii).